The following is a 347-amino-acid chain: Isopentenyl-diphosphate delta-isomerase (347 aa).

A substrate-binding site is contributed by 9–10 (RK). FMN contacts are provided by residues S67, 68-70 (SMT), S98, and N127. Substrate is bound at residue 98–100 (SQR). Q162 contributes to the substrate binding site. Residue E163 participates in Mg(2+) binding. FMN-binding positions include K194, T224, 274-276 (GIR), and 295-296 (AA).

This sequence belongs to the IPP isomerase type 2 family. Homooctamer. Dimer of tetramers. FMN serves as cofactor. NADPH is required as a cofactor. Requires Mg(2+) as cofactor.

The protein resides in the cytoplasm. It catalyses the reaction isopentenyl diphosphate = dimethylallyl diphosphate. Functionally, involved in the biosynthesis of isoprenoids. Catalyzes the 1,3-allylic rearrangement of the homoallylic substrate isopentenyl (IPP) to its allylic isomer, dimethylallyl diphosphate (DMAPP). This Cronobacter sakazakii (strain ATCC BAA-894) (Enterobacter sakazakii) protein is Isopentenyl-diphosphate delta-isomerase.